The sequence spans 352 residues: Peptide chain release factor 1 (352 aa).

Position 233 is an N5-methylglutamine (Gln233). Residues 288 to 309 (NAKDRKEQVGSGDRSERIRTYN) are disordered. The segment covering 289-306 (AKDRKEQVGSGDRSERIR) has biased composition (basic and acidic residues).

This sequence belongs to the prokaryotic/mitochondrial release factor family. Methylated by PrmC. Methylation increases the termination efficiency of RF1.

It is found in the cytoplasm. Peptide chain release factor 1 directs the termination of translation in response to the peptide chain termination codons UAG and UAA. This is Peptide chain release factor 1 from Helicobacter pylori (strain Shi470).